Consider the following 396-residue polypeptide: Probable sugar efflux transporter (396 aa).

Residues 1–14 are Cytoplasmic-facing; it reads MTTNTVSRKVAWLR. The chain crosses the membrane as a helical span at residues 15-35; sequence VVTLAVAAFIFNTTEFVPVGL. Residues 36-49 are Periplasmic-facing; that stretch reads LSDIAQSFHMQTAQ. The chain crosses the membrane as a helical span at residues 50-70; sequence VGIMLTIYAWVVALMSLPFML. Residues 71-80 lie on the Cytoplasmic side of the membrane; sequence MTSQVERRKL. The helical transmembrane segment at 81–101 threads the bilayer; sequence LICLFVVFIASHVLSFLSWSF. A topological domain (periplasmic) is located at residue Thr-102. Residues 103–123 form a helical membrane-spanning segment; the sequence is VLVISRIGVAFAHAIFWSITA. The Cytoplasmic portion of the chain corresponds to 124-135; the sequence is SLAIRMAPAGKR. A helical transmembrane segment spans residues 136–156; sequence AQALSLIATGTALAMVLGLPL. Residues 157 to 169 lie on the Periplasmic side of the membrane; it reads GRIVGQYFGWRMT. A helical membrane pass occupies residues 170–190; the sequence is FFAIGIGALITLLCLIKLLPL. The Cytoplasmic portion of the chain corresponds to 191–208; the sequence is LPSEHSGSLKSLPLLFRR. Residues 209-229 form a helical membrane-spanning segment; the sequence is PALMSIYLLTVVVVTAHYTAY. Residues 230–245 lie on the Periplasmic side of the membrane; the sequence is SYIEPFVQNIAGFSAN. The chain crosses the membrane as a helical span at residues 246-266; sequence FATALLLLLGGAGIIGSVIFG. Residues 267-274 lie on the Cytoplasmic side of the membrane; it reads KLGNQYAS. The chain crosses the membrane as a helical span at residues 275–295; the sequence is ALVSTAIALLLVCLALLLPAA. Residues 296-298 lie on the Periplasmic side of the membrane; it reads NSE. A helical transmembrane segment spans residues 299 to 319; that stretch reads IHLGVLSIFWGIAMMIIGLGM. Over 320–332 the chain is Cytoplasmic; that stretch reads QVKVLALAPDATD. A helical transmembrane segment spans residues 333–353; it reads VAMALFSGIFNIGIGAGALVG. At 354 to 363 the chain is on the periplasmic side; that stretch reads NQVSLHWSMS. A helical membrane pass occupies residues 364–384; that stretch reads MIGYVGTVPAFAALIWSIIIF. At 385-396 the chain is on the cytoplasmic side; the sequence is RRWPVTLEEQTQ.

Belongs to the major facilitator superfamily. SotB (TC 2.A.1.2) family.

The protein localises to the cell inner membrane. Functionally, involved in the efflux of sugars. The physiological role may be the reduction of the intracellular concentration of toxic sugars or sugar metabolites. The polypeptide is Probable sugar efflux transporter (Escherichia coli O157:H7).